Consider the following 347-residue polypeptide: N-acetyl-gamma-glutamyl-phosphate reductase (347 aa).

Residue Cys150 is part of the active site.

It belongs to the NAGSA dehydrogenase family. Type 1 subfamily.

The protein resides in the cytoplasm. The enzyme catalyses N-acetyl-L-glutamate 5-semialdehyde + phosphate + NADP(+) = N-acetyl-L-glutamyl 5-phosphate + NADPH + H(+). Its pathway is amino-acid biosynthesis; L-arginine biosynthesis; N(2)-acetyl-L-ornithine from L-glutamate: step 3/4. In terms of biological role, catalyzes the NADPH-dependent reduction of N-acetyl-5-glutamyl phosphate to yield N-acetyl-L-glutamate 5-semialdehyde. This chain is N-acetyl-gamma-glutamyl-phosphate reductase, found in Halothermothrix orenii (strain H 168 / OCM 544 / DSM 9562).